Consider the following 494-residue polypeptide: Bifunctional NAD(P)H-hydrate repair enzyme Nnr (494 aa).

The NAD(P)H-hydrate epimerase stretch occupies residues Met1 to Asn221. The YjeF N-terminal domain maps to Leu17–Gln219. The tract at residues Asn65–Asp69 is NADPHX 1; for epimerase activity. 2 residues coordinate K(+): Asn66 and Asp129. Positions Gly133–Val139 are NADPHX 1; for epimerase activity. Asp162 is a binding site for (6S)-NADPHX. Residue Ser165 participates in K(+) binding. The region spanning Asp229–Asn494 is the YjeF C-terminal domain. The interval Asp229 to Asn494 is ADP-dependent (S)-NAD(P)H-hydrate dehydratase. Residue Gly325 coordinates (6S)-NADPHX. The tract at residues His371–Arg377 is NADPHX 2; for dehydratase activity. Residues Lys408 to Thr412 and Asn427 to Gly436 each bind ADP. Asp437 lines the (6S)-NADPHX pocket.

In the N-terminal section; belongs to the NnrE/AIBP family. The protein in the C-terminal section; belongs to the NnrD/CARKD family. It depends on K(+) as a cofactor.

The enzyme catalyses (6S)-NADHX + ADP = AMP + phosphate + NADH + H(+). The catalysed reaction is (6S)-NADPHX + ADP = AMP + phosphate + NADPH + H(+). It carries out the reaction (6R)-NADHX = (6S)-NADHX. It catalyses the reaction (6R)-NADPHX = (6S)-NADPHX. In terms of biological role, bifunctional enzyme that catalyzes the epimerization of the S- and R-forms of NAD(P)HX and the dehydration of the S-form of NAD(P)HX at the expense of ADP, which is converted to AMP. This allows the repair of both epimers of NAD(P)HX, a damaged form of NAD(P)H that is a result of enzymatic or heat-dependent hydration. This Vibrio cholerae serotype O1 (strain ATCC 39315 / El Tor Inaba N16961) protein is Bifunctional NAD(P)H-hydrate repair enzyme Nnr (nnr).